A 53-amino-acid chain; its full sequence is Large ribosomal subunit protein eL40 (53 aa).

Belongs to the eukaryotic ribosomal protein eL40 family.

This chain is Large ribosomal subunit protein eL40, found in Pyrobaculum islandicum (strain DSM 4184 / JCM 9189 / GEO3).